The following is a 139-amino-acid chain: Probable disulfide formation protein C 2 (139 aa).

Residues K6 to F25 form a helical membrane-spanning segment. C35 and C38 are oxidised to a cystine. 2 consecutive transmembrane segments (helical) span residues Y40 to K59 and Y66 to T83. A disulfide bridge connects residues C95 and C101. A helical transmembrane segment spans residues G110–S133.

The protein belongs to the DsbB family. BdbC subfamily.

It is found in the cell membrane. In terms of biological role, required for disulfide bond formation in some proteins. In Bacillus cereus (strain ATCC 10987 / NRS 248), this protein is Probable disulfide formation protein C 2 (bdbC2).